The sequence spans 177 residues: 18.9 kDa heat shock protein (177 aa).

The tract at residues 1-35 (MSMITSMLGRKQNAQQKGGGGGGRTGGGGGGEIEP) is disordered. Positions 17–32 (KGGGGGGRTGGGGGGE) are enriched in gly residues. Positions 63–177 (AAGVPSTASM…PHARIIPITN (115 aa)) constitute a sHSP domain.

Belongs to the small heat shock protein (HSP20) family. May form oligomeric structures.

It is found in the cytoplasm. In Oryza sativa subsp. japonica (Rice), this protein is 18.9 kDa heat shock protein (HSP18.9).